The following is a 463-amino-acid chain: Succinate--CoA ligase [ADP-forming] subunit beta, mitochondrial (463 aa).

A mitochondrion-targeting transit peptide spans 1–53 (MAASVFYGRLLAVATLRNHRPRTALGAAAQVLGSSGLFNNHGLQVQQQQQRNL). The ATP-grasp domain occupies 61-288 (MELLQEAGVS…SNSAYRQKKI (228 aa)). Residue Lys78 is modified to N6-acetyllysine. Tyr84 is modified (phosphotyrosine). Position 88 is an N6-acetyllysine; alternate (Lys88). Residue Lys88 is modified to N6-succinyllysine; alternate. ATP-binding positions include Lys98 and 105–107 (GRG). N6-acetyllysine is present on residues Lys129, Lys139, Lys143, and Lys216. Residues Asn258 and Asp272 each contribute to the Mg(2+) site. Ser279 carries the post-translational modification Phosphoserine. Asn323 serves as a coordination point for substrate. Phosphothreonine is present on Thr341. Residue Lys368 is modified to N6-acetyllysine. 380-382 (GIM) is a binding site for substrate.

The protein belongs to the succinate/malate CoA ligase beta subunit family. ATP-specific subunit beta subfamily. Heterodimer of an alpha and a beta subunit. The beta subunit determines specificity for ATP. Interacts with ALAS2. It depends on Mg(2+) as a cofactor.

It is found in the mitochondrion. It catalyses the reaction succinate + ATP + CoA = succinyl-CoA + ADP + phosphate. Its pathway is carbohydrate metabolism; tricarboxylic acid cycle; succinate from succinyl-CoA (ligase route): step 1/1. Functionally, ATP-specific succinyl-CoA synthetase functions in the citric acid cycle (TCA), coupling the hydrolysis of succinyl-CoA to the synthesis of ATP and thus represents the only step of substrate-level phosphorylation in the TCA. The beta subunit provides nucleotide specificity of the enzyme and binds the substrate succinate, while the binding sites for coenzyme A and phosphate are found in the alpha subunit. This Macaca fascicularis (Crab-eating macaque) protein is Succinate--CoA ligase [ADP-forming] subunit beta, mitochondrial.